We begin with the raw amino-acid sequence, 298 residues long: Urease accessory protein UreD (298 aa).

Belongs to the UreD family. In terms of assembly, ureD, UreF and UreG form a complex that acts as a GTP-hydrolysis-dependent molecular chaperone, activating the urease apoprotein by helping to assemble the nickel containing metallocenter of UreC. The UreE protein probably delivers the nickel.

It is found in the cytoplasm. Its function is as follows. Required for maturation of urease via the functional incorporation of the urease nickel metallocenter. The sequence is that of Urease accessory protein UreD from Marinobacter nauticus (strain ATCC 700491 / DSM 11845 / VT8) (Marinobacter aquaeolei).